The primary structure comprises 247 residues: Uridylate kinase (247 aa).

Residue 17 to 20 coordinates ATP; that stretch reads KFSG. Position 59 (Gly59) interacts with UMP. 2 residues coordinate ATP: Gly60 and Arg64. UMP-binding positions include Asp79 and 140–147; that span reads TGNPFFTT. 3 residues coordinate ATP: Thr167, Tyr173, and Asp176.

Belongs to the UMP kinase family. As to quaternary structure, homohexamer.

Its subcellular location is the cytoplasm. It carries out the reaction UMP + ATP = UDP + ADP. It functions in the pathway pyrimidine metabolism; CTP biosynthesis via de novo pathway; UDP from UMP (UMPK route): step 1/1. Inhibited by UTP. In terms of biological role, catalyzes the reversible phosphorylation of UMP to UDP. The chain is Uridylate kinase from Legionella pneumophila (strain Lens).